The primary structure comprises 384 residues: 23S rRNA (uracil(747)-C(5))-methyltransferase RlmC (384 aa).

Cys7, Cys15, Cys18, and Cys94 together coordinate [4Fe-4S] cluster. 4 residues coordinate S-adenosyl-L-methionine: Gln219, Phe248, Glu269, and Asn316. Catalysis depends on Cys343, which acts as the Nucleophile.

Belongs to the class I-like SAM-binding methyltransferase superfamily. RNA M5U methyltransferase family. RlmC subfamily.

The enzyme catalyses uridine(747) in 23S rRNA + S-adenosyl-L-methionine = 5-methyluridine(747) in 23S rRNA + S-adenosyl-L-homocysteine + H(+). Catalyzes the formation of 5-methyl-uridine at position 747 (m5U747) in 23S rRNA. The polypeptide is 23S rRNA (uracil(747)-C(5))-methyltransferase RlmC (Shewanella sp. (strain ANA-3)).